The following is a 515-amino-acid chain: Maturase K (515 aa).

It belongs to the intron maturase 2 family. MatK subfamily.

It localises to the plastid. The protein resides in the chloroplast. In terms of biological role, usually encoded in the trnK tRNA gene intron. Probably assists in splicing its own and other chloroplast group II introns. This Pinus luchuensis (Ryukyu island pine) protein is Maturase K.